We begin with the raw amino-acid sequence, 309 residues long: DNA replication terminus site-binding protein (309 aa).

This sequence belongs to the Tus family.

It is found in the cytoplasm. Trans-acting protein required for termination of DNA replication. Binds to DNA replication terminator sequences (terA to terF) to prevent the passage of replication forks. The termination efficiency will be affected by the affinity of this protein for the terminator sequence. This Yersinia enterocolitica serotype O:8 / biotype 1B (strain NCTC 13174 / 8081) protein is DNA replication terminus site-binding protein.